Here is a 258-residue protein sequence, read N- to C-terminus: tRNA pseudouridine synthase A (258 aa).

Catalysis depends on Asp52, which acts as the Nucleophile. Tyr110 is a substrate binding site.

This sequence belongs to the tRNA pseudouridine synthase TruA family. In terms of assembly, homodimer.

It catalyses the reaction uridine(38/39/40) in tRNA = pseudouridine(38/39/40) in tRNA. In terms of biological role, formation of pseudouridine at positions 38, 39 and 40 in the anticodon stem and loop of transfer RNAs. In Francisella tularensis subsp. mediasiatica (strain FSC147), this protein is tRNA pseudouridine synthase A.